The chain runs to 1130 residues: Putative beta-hexosaminidase (1130 aa).

The signal sequence occupies residues 1-23 (MKWVKSGVGILGILLIICHAVTS). 2 stretches are compositionally biased toward low complexity: residues 1001 to 1030 (PGQMRALGQQAGQALRGQGQQTGQQTLPAQ) and 1037 to 1072 (LTGQAAGTGVAGQSGQQPSAAGQGTQQGLPGQQRTG). Disordered stretches follow at residues 1001–1075 (PGQM…GVVP) and 1102–1130 (QMRGQGQIPQTQGAVAGAGQSRVPQQQAG).

The protein belongs to the glycosyl hydrolase 20 family. Prismatic layer of shell (at protein level). Expressed primarily in the mantle with highest level in the mantle edge and lower level in the mantle pallium.

The protein localises to the secreted. The catalysed reaction is Hydrolysis of terminal non-reducing N-acetyl-D-hexosamine residues in N-acetyl-beta-D-hexosaminides.. The protein operates within glycan degradation; chitin degradation. The protein is Putative beta-hexosaminidase of Pinctada maxima (Silver-lipped pearl oyster).